A 158-amino-acid chain; its full sequence is Phosphopantetheine adenylyltransferase (158 aa).

Substrate is bound at residue S9. Residues 9 to 10 (SF) and H17 contribute to the ATP site. Positions 41, 73, and 87 each coordinate substrate. ATP is bound by residues 88-90 (GLR), E98, and 122-128 (YSFVSSS).

It belongs to the bacterial CoaD family. As to quaternary structure, homohexamer. It depends on Mg(2+) as a cofactor.

Its subcellular location is the cytoplasm. It carries out the reaction (R)-4'-phosphopantetheine + ATP + H(+) = 3'-dephospho-CoA + diphosphate. It participates in cofactor biosynthesis; coenzyme A biosynthesis; CoA from (R)-pantothenate: step 4/5. Its function is as follows. Reversibly transfers an adenylyl group from ATP to 4'-phosphopantetheine, yielding dephospho-CoA (dPCoA) and pyrophosphate. This Mycobacterium sp. (strain JLS) protein is Phosphopantetheine adenylyltransferase.